The primary structure comprises 97 residues: Putative ankyrin repeat protein RBE_0357 (97 aa).

An ANK repeat occupies 24-54 (YGKTALHYAYTKRNIDIIKILLKCPGIKICI).

In Rickettsia bellii (strain RML369-C), this protein is Putative ankyrin repeat protein RBE_0357.